We begin with the raw amino-acid sequence, 209 residues long: MARYTGPVCRLCRRETMKLFLKGDRCYTDKCALERRNYAPGQHGQGRTKVSDYGTQLREKQRMKRTYGLLEKQFRAYFDKADSMKGVTGENLLVLLERRLDSAVYRLGFASSRTEGRALVRQGHFLVNGRKVNIPSYVMRPNDVIELREKSRKITRINDALDGVMRRGLPSWVELDREAFKGTFKTLPVREEMTTPAFQEQLIVELYSK.

In terms of domain architecture, S4 RNA-binding spans 98–159 (RRLDSAVYRL…KSRKITRIND (62 aa)).

This sequence belongs to the universal ribosomal protein uS4 family. Part of the 30S ribosomal subunit. Contacts protein S5. The interaction surface between S4 and S5 is involved in control of translational fidelity.

One of the primary rRNA binding proteins, it binds directly to 16S rRNA where it nucleates assembly of the body of the 30S subunit. Its function is as follows. With S5 and S12 plays an important role in translational accuracy. This chain is Small ribosomal subunit protein uS4, found in Syntrophotalea carbinolica (strain DSM 2380 / NBRC 103641 / GraBd1) (Pelobacter carbinolicus).